The sequence spans 311 residues: Methionyl-tRNA formyltransferase (311 aa).

117–120 (SLLP) contributes to the (6S)-5,6,7,8-tetrahydrofolate binding site.

It belongs to the Fmt family.

It carries out the reaction L-methionyl-tRNA(fMet) + (6R)-10-formyltetrahydrofolate = N-formyl-L-methionyl-tRNA(fMet) + (6S)-5,6,7,8-tetrahydrofolate + H(+). Its function is as follows. Attaches a formyl group to the free amino group of methionyl-tRNA(fMet). The formyl group appears to play a dual role in the initiator identity of N-formylmethionyl-tRNA by promoting its recognition by IF2 and preventing the misappropriation of this tRNA by the elongation apparatus. The sequence is that of Methionyl-tRNA formyltransferase from Bordetella avium (strain 197N).